The primary structure comprises 988 residues: MSSSAIDADISPASLAARFAAGPQLHAPDEAEKRCADWLADVPAELAAPIRAVADRCPNLRIALQSIAEASPYLFDLIRADPARLLRLLRSEPETGFRALLDATAAAVATASDEAEVMAVLRRMKAEAALSIALCDIGGLWPVLQVTQALTDLAVQSVQMTLRFLLRQEAARGRIHPPNPDAPEERSGLIVLAMGKMGAGELNYSSDIDLIVFYELDAPTLAPDIEPQPFFVRVTQGLSRILQQRRHDGYVFRVDLRLRPDPASTPVALSTASALNYYEREGRTWERAAMIKARACAGDVVAGEALLSEIAPFVWRKHLDFAALSDVHDMKRQMQTFRGQTEVAVEGHNVKVGRGGIREIEFFAQTQQLIAGGRHPELRVRPTLAALDILANRDWITFQARDELSAAYQFLRRVEHRIQMIADEQTHTLPDSIEAVERFSRFFGYASREAFARDLLAHLDCVQGHYSKLFEGDPTGTAKLPIDYAGGAEDTVLLDHLRALGYKKPLMVATTLQQWMAGGYRILKVEATQRAFNDFVPALIEELARAEEPDNAVNAFDRLLQALHRGGRLISLLSQNRDLLTLIALVLGAAPRLGDMLARQPQIMDGLIDPRFFGAMPDRTELSARLAATLSDAGSYEEFLDRLRLFGQESLFLIGTRILSGTVSTQQASIAFADVAEGIVGTVHDLVSKQFVSQYGRIKDQETAILAMGKLGSREMTAASDLDLILIYDFDHEQPDSDGERSLHGAQYFARFTQRLISAFTTRTNYGVLYDVDMRLRPSGRAGPLASRLDSFAEYQEVEAWTWEHLALTRARVISASPEFRARIEQVIRAVLTRPRDAAIANDVAEMRAAIAQEKGEGDVWDLKYAAGGMVDIDFIAQYLQLVHAATMPDILAVGTLSAIDNAARLGVLAQPDADVLRPAARLYHDLTQILRLCVSDKFKPETAGDDLLRVLVRAGDAPDFSSLQARVKETQAEVRAIFNRLIGGNGE.

The interval Met1–Pro474 is adenylyl removase. Residues Leu480–Glu988 are adenylyl transferase.

It belongs to the GlnE family. Mg(2+) is required as a cofactor.

The enzyme catalyses [glutamine synthetase]-O(4)-(5'-adenylyl)-L-tyrosine + phosphate = [glutamine synthetase]-L-tyrosine + ADP. It catalyses the reaction [glutamine synthetase]-L-tyrosine + ATP = [glutamine synthetase]-O(4)-(5'-adenylyl)-L-tyrosine + diphosphate. Involved in the regulation of glutamine synthetase GlnA, a key enzyme in the process to assimilate ammonia. When cellular nitrogen levels are high, the C-terminal adenylyl transferase (AT) inactivates GlnA by covalent transfer of an adenylyl group from ATP to specific tyrosine residue of GlnA, thus reducing its activity. Conversely, when nitrogen levels are low, the N-terminal adenylyl removase (AR) activates GlnA by removing the adenylyl group by phosphorolysis, increasing its activity. The regulatory region of GlnE binds the signal transduction protein PII (GlnB) which indicates the nitrogen status of the cell. This is Bifunctional glutamine synthetase adenylyltransferase/adenylyl-removing enzyme from Rhodopseudomonas palustris (strain HaA2).